The sequence spans 894 residues: Mitogen-activated protein kinase kinase kinase kinase 3 (894 aa).

Met1 bears the N-acetylmethionine mark. The region spanning 16–273 is the Protein kinase domain; the sequence is FELIQRIGSG…AEKLLQHPFV (258 aa). Residues 22-30, Lys45, and Lys48 contribute to the ATP site; that span reads IGSGTYGDV. Asp136 serves as the catalytic Proton acceptor. Phosphoserine occurs at positions 329 and 398. The segment at 410–536 is disordered; it reads AHLEDDEGDD…DVPKPISNGL (127 aa). The segment covering 473–487 has biased composition (pro residues); that stretch reads QVPPRPPPPRLPPHK. Over residues 513–529 the composition is skewed to basic and acidic residues; that stretch reads NEHRGTNLSRKEKKDVP. Residues 556–867 enclose the CNH domain; the sequence is PLKIHCASSW…IFRLLGSDRV (312 aa).

The protein belongs to the protein kinase superfamily. STE Ser/Thr protein kinase family. STE20 subfamily. As to quaternary structure, interacts with SH3GL2. Interaction appears to regulate MAP4K3-mediated JNK activation. Mg(2+) is required as a cofactor. Ubiquitously expressed in all tissues examined, with high levels in heart, brain, placenta, skeletal muscle, kidney and pancreas and lower levels in lung and liver.

It catalyses the reaction L-seryl-[protein] + ATP = O-phospho-L-seryl-[protein] + ADP + H(+). The enzyme catalyses L-threonyl-[protein] + ATP = O-phospho-L-threonyl-[protein] + ADP + H(+). Serine/threonine kinase that plays a role in the response to environmental stress. Appears to act upstream of the JUN N-terminal pathway. Activator of the Hippo signaling pathway which plays a pivotal role in organ size control and tumor suppression by restricting proliferation and promoting apoptosis. MAP4Ks act in parallel to and are partially redundant with STK3/MST2 and STK4/MST2 in the phosphorylation and activation of LATS1/2, and establish MAP4Ks as components of the expanded Hippo pathway. This Homo sapiens (Human) protein is Mitogen-activated protein kinase kinase kinase kinase 3.